We begin with the raw amino-acid sequence, 126 residues long: Mating-type protein A1 (126 aa).

The segment at residues 70–126 is a DNA-binding region (homeobox); it reads SPKGKSSISPQARAFLEQVFRRKQSLNSKEKEEVAKKCGITPLQVRVWFINKRMRSK.

It belongs to the MATA1 family. As to quaternary structure, binds DNA with a high specificity as a heterodimer of A1 and ALPHA2.

It localises to the nucleus. Functionally, mating type proteins are sequence specific DNA-binding proteins that act as master switches in yeast differentiation by controlling gene expression in a cell type-specific fashion. Transcriptional corepressor that, in a/alpha diploid cells, binds cooperatively with the ALPHA2 protein to a 21-bp DNA sequence termed the haploid-specific gene (hsg) operator, to repress transcription of haploid-specific genes and of MATALPHA1. This Saccharomyces cerevisiae (Baker's yeast) protein is Mating-type protein A1 (MATA1).